Reading from the N-terminus, the 116-residue chain is Phosphoribosyl-AMP cyclohydrolase (116 aa).

Asp-85 contacts Mg(2+). Residue Cys-86 coordinates Zn(2+). Residues Asp-87 and Asp-89 each coordinate Mg(2+). Zn(2+)-binding residues include Cys-102 and Cys-109.

Belongs to the PRA-CH family. As to quaternary structure, homodimer. Requires Mg(2+) as cofactor. The cofactor is Zn(2+).

Its subcellular location is the cytoplasm. It carries out the reaction 1-(5-phospho-beta-D-ribosyl)-5'-AMP + H2O = 1-(5-phospho-beta-D-ribosyl)-5-[(5-phospho-beta-D-ribosylamino)methylideneamino]imidazole-4-carboxamide. The protein operates within amino-acid biosynthesis; L-histidine biosynthesis; L-histidine from 5-phospho-alpha-D-ribose 1-diphosphate: step 3/9. Catalyzes the hydrolysis of the adenine ring of phosphoribosyl-AMP. This chain is Phosphoribosyl-AMP cyclohydrolase, found in Thermobifida fusca (strain YX).